A 197-amino-acid chain; its full sequence is DnaJ homolog subfamily C member 5 (197 aa).

In terms of domain architecture, J spans 13 to 82 (GESLYHVLGL…RNIYDKYGSL (70 aa)). Residues 153 to 197 (EDLEAQMQSDERDTEGPVLVQPASATETTQLTSDSHASYHTDGFN) are disordered. Residues 175–197 (ASATETTQLTSDSHASYHTDGFN) show a composition bias toward polar residues.

Post-translationally, palmitoylated. Palmitoylation occurs probably in the cysteine-rich domain and regulates DNAJC5 stable membrane attachment.

Its subcellular location is the cytoplasm. It localises to the cytosol. The protein localises to the membrane. The protein resides in the cytoplasmic vesicle. It is found in the secretory vesicle. Its subcellular location is the chromaffin granule membrane. It localises to the melanosome. The protein localises to the cell membrane. Its function is as follows. May have an important role in presynaptic function. May be involved in calcium-dependent neurotransmitter release at nerve endings. The chain is DnaJ homolog subfamily C member 5 from Xenopus laevis (African clawed frog).